Consider the following 264-residue polypeptide: Phosphonoacetaldehyde hydrolase (264 aa).

Residue Asp-9 is the Nucleophile of the active site. Residues Asp-9 and Ala-11 each coordinate Mg(2+). Lys-50 acts as the Schiff-base intermediate with substrate in catalysis. Mg(2+) is bound at residue Asp-183.

The protein belongs to the HAD-like hydrolase superfamily. PhnX family. In terms of assembly, homodimer. Mg(2+) serves as cofactor.

The catalysed reaction is phosphonoacetaldehyde + H2O = acetaldehyde + phosphate + H(+). In terms of biological role, involved in phosphonate degradation. This is Phosphonoacetaldehyde hydrolase from Bacillus cereus (strain B4264).